Here is a 372-residue protein sequence, read N- to C-terminus: 18-hydroxynorfluorocurarine reductase (372 aa).

Residues cysteine 47, aspartate 50, histidine 69, glutamate 70, cysteine 100, cysteine 103, cysteine 106, cysteine 114, and cysteine 172 each coordinate Zn(2+). NADP(+)-binding positions include 197-202 (GLGGIG), lysine 226, 283-285 (LGA), serine 307, and arginine 354.

This sequence belongs to the zinc-containing alcohol dehydrogenase family. As to quaternary structure, homodimer. Zn(2+) is required as a cofactor. In terms of tissue distribution, mainly expressed in roots.

It carries out the reaction (19E)-cur-19-en-17-al + NADP(+) = norfluorocurarine + NADPH + H(+). The catalysed reaction is 17,18-epoxy-17-hydroxycur-19-ene + NADP(+) = 18-hydroxynorfluorocurarine + NADPH + H(+). Its pathway is alkaloid biosynthesis. Functionally, alcohol dehydrogenase involved in the biosynthesis of curare monoterpene indole alkaloids (MIAs), natural products such as strychnine, a neurotoxic compound used as a pesticide to control rodents, and its pharmacologically active derivatives, including brucine, used to regulate blood pressure. Curare alkaloids act as animal glycine receptor antagonists. Catalyzes the conversion of norfluorocurarine to desoxy Wieland-Gumlich aldehyde, and of 18-OH norfluorocurarine to Wieland-Gumlich aldehyde. This Strychnos nux-vomica (Poison nut) protein is 18-hydroxynorfluorocurarine reductase.